We begin with the raw amino-acid sequence, 198 residues long: Guanylyl cyclase-activating protein 2 (198 aa).

G2 carries the N-myristoyl glycine lipid modification. EF-hand domains lie at 16–51 (DVAELQEWYKKFVVECPSGTLFMHEFKRFFGVQDNH), 52–87 (EAAEYIENMFRAFDKNGDNTIDFLEYVAALNLVLRG), 88–123 (KLEHKLRWTFKVYDKDGNGCIDKPELLEIVESIYKL), and 139–174 (TPEEVVDRIFQLVDENGDGQLSLDEFIDGARKDKWV). D65, N67, D69, T71, E76, D101, D103, N105, C107, E112, D152, N154, D156, Q158, and E163 together coordinate Ca(2+).

In terms of assembly, undergoes dimerization at low calcium ions concentration, while the presence of calcium ions inhibits its dimerization. Dimerization correlates with its ability to activate GC. In terms of tissue distribution, retina and pineal gland.

In terms of biological role, stimulates synthesis of cGMP in photoreceptors. Thought to mediate Ca(2+)-sensitive regulation of retinal guanylyl cyclase (GC), a key event in recovery of the dark state of rod photoreceptors following light exposure. The chain is Guanylyl cyclase-activating protein 2 (GUCA1B) from Gallus gallus (Chicken).